Here is a 430-residue protein sequence, read N- to C-terminus: MKIGFLGFGKSNRSLLKYLLNHQEAKFFVSEAKTLDGETKKFLEEHSVEYEEGGHTEKLLDCDVVYVSPGIKPDTSMIELLSSRGVKLSTELQFFLDNVDPKKVVGITGTDGKSTATALMYHVLSGRGFKTFLGGNFGTPAVEALEGEYDYYVLEMSSFQLFWSERPYLSNFLVLNISEDHLDWHSSFKEYVDSKLKPAFLQTEGDLFVYNKHIERLRNLEGVRSRKIPFWTDENFATEKELIVRGKKYTLPGNYPYQMRENILAVSVLYMEMFNELESFLELLRDFKPLPHRMEYLGQIDGRHFYNDSKATSTHAVLGALSNFDKVVLIMCGIGKKENYSLFVEKASPKLKHLIMFGEISKELAPFVGKIPHSIVENMEEAFEKAMEVSEKGDVILLSPGGASFDMYENYAKRGEHFREIFKRHGGDEV.

109–115 (GTDGKST) serves as a coordination point for ATP.

This sequence belongs to the MurCDEF family.

Its subcellular location is the cytoplasm. It carries out the reaction UDP-N-acetyl-alpha-D-muramoyl-L-alanine + D-glutamate + ATP = UDP-N-acetyl-alpha-D-muramoyl-L-alanyl-D-glutamate + ADP + phosphate + H(+). Its pathway is cell wall biogenesis; peptidoglycan biosynthesis. Functionally, cell wall formation. Catalyzes the addition of glutamate to the nucleotide precursor UDP-N-acetylmuramoyl-L-alanine (UMA). The protein is UDP-N-acetylmuramoylalanine--D-glutamate ligase of Thermotoga maritima (strain ATCC 43589 / DSM 3109 / JCM 10099 / NBRC 100826 / MSB8).